The sequence spans 368 residues: Histidinol-phosphate aminotransferase 1 (368 aa).

Residue K224 is modified to N6-(pyridoxal phosphate)lysine.

The protein belongs to the class-II pyridoxal-phosphate-dependent aminotransferase family. Histidinol-phosphate aminotransferase subfamily. Homodimer. Pyridoxal 5'-phosphate serves as cofactor.

The catalysed reaction is L-histidinol phosphate + 2-oxoglutarate = 3-(imidazol-4-yl)-2-oxopropyl phosphate + L-glutamate. It participates in amino-acid biosynthesis; L-histidine biosynthesis; L-histidine from 5-phospho-alpha-D-ribose 1-diphosphate: step 7/9. In Rhizobium meliloti (strain 1021) (Ensifer meliloti), this protein is Histidinol-phosphate aminotransferase 1 (hisC1).